The primary structure comprises 357 residues: tRNA pseudouridine synthase Pus10 (357 aa).

Residues 1–118 enclose the THUMP domain; it reads MNLCRECYGI…TFTFELQIRP (118 aa). Catalysis depends on Asp-187, which acts as the Nucleophile. Positions 251 and 322 each coordinate substrate.

Belongs to the pseudouridine synthase Pus10 family.

It catalyses the reaction uridine(54) in tRNA = pseudouridine(54) in tRNA. The catalysed reaction is uridine(55) in tRNA = pseudouridine(55) in tRNA. Its function is as follows. Responsible for synthesis of pseudouridine from uracil-54 and uracil-55 in the psi GC loop of transfer RNAs. The protein is tRNA pseudouridine synthase Pus10 of Archaeoglobus fulgidus (strain ATCC 49558 / DSM 4304 / JCM 9628 / NBRC 100126 / VC-16).